The chain runs to 172 residues: Resuscitation-promoting factor RpfE (172 aa).

Positions 1-28 are cleaved as a signal peptide; the sequence is MKNARTTLIAAAIAGTLVTTSPAGIANA. Residues 33-89 are disordered; sequence LDPNAAAGPDAVGFDPNLPPAPDAAPVDTPPAPEDAGFDPNLPPPLAPDFLSPPAEE. The segment covering 49-65 has biased composition (pro residues); sequence NLPPAPDAAPVDTPPAP.

The protein belongs to the transglycosylase family. Rpf subfamily. Interacts with RipA.

Factor that stimulates resuscitation of dormant cells. Has peptidoglycan (PG) hydrolytic activity. Active in the pM concentration range. Has little to no effect on actively-growing cells. PG fragments could either directly activate the resuscitation pathway of dormant bacteria or serve as a substrate for endogenous Rpf, resulting in low molecular weight products with resuscitation activity. In terms of biological role, stimulates growth of stationary phase M.bovis (a slow-growing Mycobacterium), reduces the lag phase of diluted fast-growers M.smegmatis and Micrococcus luteus. Sequential gene disruption indicates RpfB and RpfE are higher than RpfD and RpfC in functional hierarchy. The chain is Resuscitation-promoting factor RpfE (rpfE) from Mycobacterium tuberculosis (strain ATCC 25618 / H37Rv).